Consider the following 292-residue polypeptide: Glutamyl-Q tRNA(Asp) synthetase (292 aa).

L-glutamate-binding positions include 11–15 (RFAPS) and glutamate 47. The 'HIGH' region motif lies at 14 to 24 (PSPTGPLHFGS). Positions 103, 105, 116, and 120 each coordinate Zn(2+). 2 residues coordinate L-glutamate: tyrosine 173 and arginine 191. Positions 229-233 (KLSKQ) match the 'KMSKS' region motif. Lysine 232 provides a ligand contact to ATP.

The protein belongs to the class-I aminoacyl-tRNA synthetase family. GluQ subfamily. Zn(2+) is required as a cofactor.

Catalyzes the tRNA-independent activation of glutamate in presence of ATP and the subsequent transfer of glutamate onto a tRNA(Asp). Glutamate is transferred on the 2-amino-5-(4,5-dihydroxy-2-cyclopenten-1-yl) moiety of the queuosine in the wobble position of the QUC anticodon. This is Glutamyl-Q tRNA(Asp) synthetase from Acinetobacter baylyi (strain ATCC 33305 / BD413 / ADP1).